Reading from the N-terminus, the 237-residue chain is Ribonuclease PH (237 aa).

Residues Arg-86 and 124-126 contribute to the phosphate site; that span reads GTR.

The protein belongs to the RNase PH family. Homohexameric ring arranged as a trimer of dimers.

The enzyme catalyses tRNA(n+1) + phosphate = tRNA(n) + a ribonucleoside 5'-diphosphate. Phosphorolytic 3'-5' exoribonuclease that plays an important role in tRNA 3'-end maturation. Removes nucleotide residues following the 3'-CCA terminus of tRNAs; can also add nucleotides to the ends of RNA molecules by using nucleoside diphosphates as substrates, but this may not be physiologically important. Probably plays a role in initiation of 16S rRNA degradation (leading to ribosome degradation) during starvation. The polypeptide is Ribonuclease PH (Beijerinckia indica subsp. indica (strain ATCC 9039 / DSM 1715 / NCIMB 8712)).